The following is a 360-amino-acid chain: Phospho-N-acetylmuramoyl-pentapeptide-transferase (360 aa).

Helical transmembrane passes span 26 to 46, 73 to 93, 97 to 117, 132 to 152, 168 to 188, 199 to 219, 236 to 256, 263 to 283, 288 to 308, and 338 to 358; these read AILG…KMIA, TMGG…WGDL, YVWV…IDDY, WKYL…YASA, VMPQ…VGSS, GLAI…AYLS, AGEL…FLWF, VFMG…IAVL, ILLV…ILQV, and VIVR…ATLK.

It belongs to the glycosyltransferase 4 family. MraY subfamily. Mg(2+) is required as a cofactor.

The protein resides in the cell inner membrane. It carries out the reaction UDP-N-acetyl-alpha-D-muramoyl-L-alanyl-gamma-D-glutamyl-meso-2,6-diaminopimeloyl-D-alanyl-D-alanine + di-trans,octa-cis-undecaprenyl phosphate = di-trans,octa-cis-undecaprenyl diphospho-N-acetyl-alpha-D-muramoyl-L-alanyl-D-glutamyl-meso-2,6-diaminopimeloyl-D-alanyl-D-alanine + UMP. Its pathway is cell wall biogenesis; peptidoglycan biosynthesis. Catalyzes the initial step of the lipid cycle reactions in the biosynthesis of the cell wall peptidoglycan: transfers peptidoglycan precursor phospho-MurNAc-pentapeptide from UDP-MurNAc-pentapeptide onto the lipid carrier undecaprenyl phosphate, yielding undecaprenyl-pyrophosphoryl-MurNAc-pentapeptide, known as lipid I. The chain is Phospho-N-acetylmuramoyl-pentapeptide-transferase from Shewanella halifaxensis (strain HAW-EB4).